Here is a 493-residue protein sequence, read N- to C-terminus: Cobyric acid synthase (493 aa).

The GATase cobBQ-type domain maps to Pro246–Phe440. Cys326 functions as the Nucleophile in the catalytic mechanism. The active site involves His432.

This sequence belongs to the CobB/CobQ family. CobQ subfamily.

The protein operates within cofactor biosynthesis; adenosylcobalamin biosynthesis. Functionally, catalyzes amidations at positions B, D, E, and G on adenosylcobyrinic A,C-diamide. NH(2) groups are provided by glutamine, and one molecule of ATP is hydrogenolyzed for each amidation. This Clostridium botulinum (strain Langeland / NCTC 10281 / Type F) protein is Cobyric acid synthase.